Consider the following 65-residue polypeptide: Large ribosomal subunit protein bL35 (65 aa).

Belongs to the bacterial ribosomal protein bL35 family.

The protein is Large ribosomal subunit protein bL35 of Oleidesulfovibrio alaskensis (strain ATCC BAA-1058 / DSM 17464 / G20) (Desulfovibrio alaskensis).